Here is a 1217-residue protein sequence, read N- to C-terminus: Rho family-interacting cell polarization regulator 1 (1217 aa).

The residue at position 22 (Ser-22) is a Phosphoserine. Positions 83–112 (RGLTAYLEVHQQEQEKLQRQIKESKRNSRL) form a coiled coil. 2 positions are modified to phosphoserine: Ser-345 and Ser-347. Phosphothreonine is present on Thr-351. Positions 371–413 (NGTAWSLSSESSDDSSSPQLSGTARYSSTPKPLVQQPEPLPVQ) are disordered. Low complexity-rich tracts occupy residues 376 to 391 (SLSSESSDDSSSPQLS) and 400 to 413 (PKPLVQQPEPLPVQ). Phosphoserine occurs at positions 452 and 455. Residues 565-762 (TSTTVGSTHK…SPSSIVPEPQ (198 aa)) are disordered. A compositionally biased stretch (polar residues) spans 579–594 (PLTSTGSIPSVTDSIQ). Residues 595-649 (TTTSPTHTTPSPTHTTVSPTHSTPSPTHTTVSPSNAALSPSNATPSLSHSTTSPT) show a composition bias toward low complexity. Residues 650-661 (QKATMSTHTTSA) are compositionally biased toward polar residues. The span at 664-695 (PVQTTTSPISTTVSPSPSVDTAIISSSSAVPS) shows a compositional bias: low complexity. Residues 720–729 (ACTSSPSLAS) are compositionally biased toward polar residues. A Phosphoserine modification is found at Ser-742. Residues 786-828 (RRLEEALRTLMAALDDYRGQFPELQGLEQEVTRLESLLMQRQG) adopt a coiled-coil conformation. A disordered region spans residues 850–874 (FLNDDEDEDNDSPGDRPTSSPEVVA). Residues 852–861 (NDDEDEDNDS) are compositionally biased toward acidic residues. A phosphoserine mark is found at Ser-868 and Ser-869.

This sequence belongs to the RIPOR family. In terms of assembly, interacts (via N-terminus) with RHOA (GTP-bound form); this interaction links active RHOA to STK24 and STK26 kinases. Interacts with RHOB. Interacts with RHOC. Interacts (via C-terminus) with PDCD10; this interaction occurs in a Rho-independent manner. Interacts (via C-terminus) with STK24; this interaction occurs in a PDCD10-dependent and Rho-independent manner. Interacts (via C-terminus) with STK26; this interaction occurs in a PDCD10-dependent and Rho-independent manner. Interacts (via N-terminus) with 14-3-3 proteins; these interactions occur in a Rho-dependent manner.

Its subcellular location is the cytoplasm. The protein resides in the golgi apparatus. In terms of biological role, downstream effector protein for Rho-type small GTPases that plays a role in cell polarity and directional migration. Acts as an adapter protein, linking active Rho proteins to STK24 and STK26 kinases, and hence positively regulates Golgi reorientation in polarized cell migration upon Rho activation. Involved in the subcellular relocation of STK26 from the Golgi to cytoplasm punctae in a Rho- and PDCD10-dependent manner upon serum stimulation. The sequence is that of Rho family-interacting cell polarization regulator 1 from Rattus norvegicus (Rat).